The sequence spans 166 residues: NAD(P)H-quinone oxidoreductase subunit I, chloroplastic (166 aa).

4Fe-4S ferredoxin-type domains follow at residues 55–84 (GRIHFEFDKCIACEVCVRVCPIDLPVVDWK) and 95–124 (LNYSIDFGICIFCGNCVEYCPTNCLSMTEE). Residues C64, C67, C70, C74, C104, C107, C110, and C114 each coordinate [4Fe-4S] cluster.

Belongs to the complex I 23 kDa subunit family. In terms of assembly, NDH is composed of at least 16 different subunits, 5 of which are encoded in the nucleus. It depends on [4Fe-4S] cluster as a cofactor.

The protein localises to the plastid. It localises to the chloroplast thylakoid membrane. The enzyme catalyses a plastoquinone + NADH + (n+1) H(+)(in) = a plastoquinol + NAD(+) + n H(+)(out). It catalyses the reaction a plastoquinone + NADPH + (n+1) H(+)(in) = a plastoquinol + NADP(+) + n H(+)(out). In terms of biological role, NDH shuttles electrons from NAD(P)H:plastoquinone, via FMN and iron-sulfur (Fe-S) centers, to quinones in the photosynthetic chain and possibly in a chloroplast respiratory chain. The immediate electron acceptor for the enzyme in this species is believed to be plastoquinone. Couples the redox reaction to proton translocation, and thus conserves the redox energy in a proton gradient. This Chamaechaenactis scaposa (Fullstem) protein is NAD(P)H-quinone oxidoreductase subunit I, chloroplastic.